The chain runs to 335 residues: F420-dependent glucose-6-phosphate dehydrogenase (335 aa).

Aspartate 40 is a binding site for coenzyme F420-(gamma-Glu)n. Histidine 41 serves as the catalytic Proton donor. Residues threonine 77 and 108-109 (TG) each bind coenzyme F420-(gamma-Glu)n. The active-site Proton acceptor is the glutamate 110. Coenzyme F420-(gamma-Glu)n-binding positions include asparagine 113, 177-178 (GG), and 180-181 (VV). Residues threonine 195, lysine 198, lysine 259, and arginine 283 each coordinate substrate.

It belongs to the F420-dependent glucose-6-phosphate dehydrogenase family. As to quaternary structure, homodimer.

It catalyses the reaction oxidized coenzyme F420-(gamma-L-Glu)(n) + D-glucose 6-phosphate + H(+) = 6-phospho-D-glucono-1,5-lactone + reduced coenzyme F420-(gamma-L-Glu)(n). In terms of biological role, catalyzes the coenzyme F420-dependent oxidation of glucose 6-phosphate (G6P) to 6-phosphogluconolactone. The sequence is that of F420-dependent glucose-6-phosphate dehydrogenase from Segniliparus rotundus (strain ATCC BAA-972 / CDC 1076 / CIP 108378 / DSM 44985 / JCM 13578).